The chain runs to 517 residues: MNVFFMFSLLFLAALGSCADDRRRPLEECFREADYEEFLEIAKNGLQRTSNPKRVVVVGAGMAGLSAAYVLAGAGHQVTLLEASERVGGRVNTYRNEKDGWYVNLGPMRLPERHRIIREYIRKFGLELNEFIQENDNAWYFIKNIRKRVSEVKKDPGVFKYPVKPSEEGKSASQLYRESLQKVIEELKRTNCSYILNKYDTYSTKEYLIKEGNLSPGAVDMIGDLLNEDSSYYLSFIESLKSDDIFSYEKRFDEIVGGFDQLPRSMYQAIAEKVHLNAQVIKIQQNAEDVRVTYQTPAKTLSYVIADYVIVCSTSRAARRIHFEPPLPPKKAHALRSIHYRSSTKIFLTCSQKFWEADGIHGGKSTTDLPSRFIYYPNHSFTSGIGVIVAYTLADDTDFFQALDIETSADIVINDLSLIHQLPKEQIQALCYPSKIQKWSLDEYAMGAITSFTPYQFQDFFEIVAAPVGRIYFAGEYTASVHGWLDSTIKSGLTAARDVNLASQKPSRIQLSNDNEL.

The signal sequence occupies residues 1–18; the sequence is MNVFFMFSLLFLAALGSC. An intrachain disulfide couples C29 to C192. Residues 62–63, 82–83, R90, and 106–109 each bind FAD; these read MA, EA, and GPMR. Position 109 (R109) interacts with substrate. An N-linked (GlcNAc...) asparagine glycan is attached at N191. V280 serves as a coordination point for FAD. A disulfide bond links C350 and C431. Residue Y391 participates in substrate binding. FAD-binding positions include E476 and 483-488; that span reads GWLDST. 483–484 contacts substrate; the sequence is GW.

Belongs to the flavin monoamine oxidase family. FIG1 subfamily. In terms of assembly, homodimer; non-covalently linked. Requires FAD as cofactor. N-glycosylated. In terms of tissue distribution, expressed by the venom gland.

The protein localises to the secreted. It carries out the reaction an L-alpha-amino acid + O2 + H2O = a 2-oxocarboxylate + H2O2 + NH4(+). Functionally, catalyzes an oxidative deamination of predominantly hydrophobic and aromatic L-amino acids, thus producing hydrogen peroxide that may contribute to the diverse toxic effects of this enzyme. Exhibits diverse biological activities, such as hemorrhage, hemolysis, edema, apoptosis of vascular endothelial cells or tumor cell lines, antiparasitic activities, as well as regulation of platelet aggregation. Effects of snake L-amino oxidases on platelets are controversial, since they either induce aggregation or inhibit agonist-induced aggregation. These different effects are probably due to different experimental conditions. This protein has antibacterial activities. In Pseudechis australis (Mulga snake), this protein is L-amino-acid oxidase.